An 89-amino-acid polypeptide reads, in one-letter code: Myrmicitoxin(1)-Pm2a (89 aa).

The first 22 residues, 1 to 22, serve as a signal peptide directing secretion; sequence MEIPKLLYIAVIAIGLSGSLTC. Positions 23 to 61 are excised as a propeptide; the sequence is ATPLANPWGDPEAEANPEAKATAEATAEAIAEALAEPEP. Asparagine 88 is modified (asparagine amide).

This sequence belongs to the formicidae venom clade 1 family. In terms of tissue distribution, expressed by the venom gland.

It localises to the secreted. Its function is as follows. Toxin that potently modulates mammalian voltage-gated sodium (Nav) channels, reducing the voltage threshold for activation and inhibiting channel inactivation. Shows activity on hNav1.6/SCN8A (EC(50)=176 nM), mNav1.7/SCN9A (EC(50)=102 nM) and hNav1.7 (EC(50)=154 nM). In vivo, causes spontaneous, gradual and long-lasting nocifensive behaviors by intraplantar injection in mice, as well as pronounced swelling of the injected paw. Does not have effect on insects (blowflies). This chain is Myrmicitoxin(1)-Pm2a, found in Pogonomyrmex maricopa (Maricopa harvester ant).